A 203-amino-acid polypeptide reads, in one-letter code: RNA annealing protein YRA2 (203 aa).

At methionine 1 the chain carries N-acetylmethionine. 2 disordered regions span residues 1–60 (MDKA…REEP) and 137–203 (QPQR…YMKG). Residues 11–20 (NSHTDSSSNH) show a composition bias toward polar residues. Over residues 47-60 (SRSKDRLYREREEP) the composition is skewed to basic and acidic residues. The 75-residue stretch at 64–138 (KRIRISKIPL…AKIEVEIYQP (75 aa)) folds into the RRM domain. 2 stretches are compositionally biased toward basic residues: residues 139 to 153 (QRKH…RRKQ) and 163 to 180 (PGSH…KNKG).

Belongs to the YRA1 family. Associates with mRNPs. Interacts with YRA1.

The protein resides in the nucleus. Functionally, involved in export of poly(A) mRNAs from the nucleus. Recruited to the coding sequences as well as poly-A sites of active genes. In Saccharomyces cerevisiae (strain Lalvin EC1118 / Prise de mousse) (Baker's yeast), this protein is RNA annealing protein YRA2 (YRA2).